The following is a 156-amino-acid chain: Cytochrome c-type biogenesis protein CcmE (156 aa).

Over 1–7 (MTRRQRR) the chain is Cytoplasmic. The chain crosses the membrane as a helical; Signal-anchor for type II membrane protein span at residues 8-28 (LGILLAALVCAGAATALTLNA). Residues 29 to 156 (FRSNLVFFFS…AKESARSASR (128 aa)) are Periplasmic-facing. Residues His123 and Tyr127 each contribute to the heme site.

The protein belongs to the CcmE/CycJ family.

The protein resides in the cell inner membrane. Its function is as follows. Heme chaperone required for the biogenesis of c-type cytochromes. Transiently binds heme delivered by CcmC and transfers the heme to apo-cytochromes in a process facilitated by CcmF and CcmH. The chain is Cytochrome c-type biogenesis protein CcmE from Ralstonia pickettii (strain 12J).